A 323-amino-acid chain; its full sequence is Beta-ketoacyl-[acyl-carrier-protein] synthase III (323 aa).

Catalysis depends on residues cysteine 113 and histidine 250. Positions glutamine 251–arginine 255 are ACP-binding. Asparagine 280 is an active-site residue.

It belongs to the thiolase-like superfamily. FabH family. In terms of assembly, homodimer.

The protein resides in the cytoplasm. The catalysed reaction is malonyl-[ACP] + acetyl-CoA + H(+) = 3-oxobutanoyl-[ACP] + CO2 + CoA. The protein operates within lipid metabolism; fatty acid biosynthesis. In terms of biological role, catalyzes the condensation reaction of fatty acid synthesis by the addition to an acyl acceptor of two carbons from malonyl-ACP. Catalyzes the first condensation reaction which initiates fatty acid synthesis and may therefore play a role in governing the total rate of fatty acid production. Possesses both acetoacetyl-ACP synthase and acetyl transacylase activities. Its substrate specificity determines the biosynthesis of branched-chain and/or straight-chain of fatty acids. This chain is Beta-ketoacyl-[acyl-carrier-protein] synthase III, found in Agrobacterium fabrum (strain C58 / ATCC 33970) (Agrobacterium tumefaciens (strain C58)).